A 259-amino-acid polypeptide reads, in one-letter code: Ribosomal RNA small subunit methyltransferase A (259 aa).

6 residues coordinate S-adenosyl-L-methionine: Asn-13, Leu-15, Gly-40, Glu-61, Asp-85, and Asn-103.

It belongs to the class I-like SAM-binding methyltransferase superfamily. rRNA adenine N(6)-methyltransferase family. RsmA subfamily.

Its subcellular location is the cytoplasm. It carries out the reaction adenosine(1518)/adenosine(1519) in 16S rRNA + 4 S-adenosyl-L-methionine = N(6)-dimethyladenosine(1518)/N(6)-dimethyladenosine(1519) in 16S rRNA + 4 S-adenosyl-L-homocysteine + 4 H(+). Functionally, specifically dimethylates two adjacent adenosines (A1518 and A1519) in the loop of a conserved hairpin near the 3'-end of 16S rRNA in the 30S particle. May play a critical role in biogenesis of 30S subunits. The chain is Ribosomal RNA small subunit methyltransferase A from Neisseria meningitidis serogroup B (strain ATCC BAA-335 / MC58).